A 129-amino-acid chain; its full sequence is Small ribosomal subunit protein bS6 (129 aa).

This sequence belongs to the bacterial ribosomal protein bS6 family.

Functionally, binds together with bS18 to 16S ribosomal RNA. This chain is Small ribosomal subunit protein bS6, found in Pelobacter propionicus (strain DSM 2379 / NBRC 103807 / OttBd1).